Here is a 257-residue protein sequence, read N- to C-terminus: Folate receptor alpha (257 aa).

A signal peptide spans 1–24 (MAQRMTTQLLLLLVWVAVVGEAQT). 8 disulfide bridges follow: cysteine 37–cysteine 65, cysteine 57–cysteine 105, cysteine 66–cysteine 109, cysteine 89–cysteine 175, cysteine 96–cysteine 146, cysteine 135–cysteine 209, cysteine 139–cysteine 189, and cysteine 152–cysteine 169. Asparagine 69 carries N-linked (GlcNAc...) asparagine glycosylation. Residues aspartate 103, tyrosine 107, 124–128 (WRKER), 157–162 (HKGWNW), and serine 196 contribute to the folate site. N-linked (GlcNAc...) asparagine glycosylation occurs at asparagine 161. Asparagine 201 carries N-linked (GlcNAc...) asparagine glycosylation. The GPI-anchor amidated serine moiety is linked to residue serine 234. A propeptide spans 235–257 (GAGPWAAWPFLLSLALMLLWLLS) (removed in mature form).

This sequence belongs to the folate receptor family. Post-translationally, the secreted form is derived from the membrane-bound form either by cleavage of the GPI anchor, or/and by proteolysis catalyzed by a metalloprotease. Primarily expressed in tissues of epithelial origin. Expression is increased in malignant tissues. Expressed in kidney, lung and cerebellum. Detected in placenta and thymus epithelium.

It is found in the cell membrane. The protein resides in the apical cell membrane. Its subcellular location is the basolateral cell membrane. It localises to the secreted. The protein localises to the cytoplasmic vesicle. It is found in the clathrin-coated vesicle. The protein resides in the endosome. In terms of biological role, binds to folate and reduced folic acid derivatives and mediates delivery of 5-methyltetrahydrofolate and folate analogs into the interior of cells. Has high affinity for folate and folic acid analogs at neutral pH. Exposure to slightly acidic pH after receptor endocytosis triggers a conformation change that strongly reduces its affinity for folates and mediates their release. Required for normal embryonic development and normal cell proliferation. The sequence is that of Folate receptor alpha (FOLR1) from Homo sapiens (Human).